The chain runs to 574 residues: MDNSIHSTDGPDSVIPNSNPKKTVRQRVRLLARHLTTREGLIGDYDYGFLFRPELPFMKKDPRAPPFFGLNEKIPVLLAFILGLQHALAMLAGVVTPPLIISSSLSLPSDLQQYLVSTSLIVCGLLSMVQITRFHIYKTPYYIGSGVLSVMGVSFSIISVASGAFNQMYSNGFCQLDEAGNRLPCPEAYGALIGTSACCALVEILLAFVPPKVIQKIFPPIVTGPTVMLIGISLIGTGFKDWAGGSACMDDGMLCPSATAPRPLPWGSPEFIGLGFLVFVSIILCERFGAPIMKSCSVVIGLLVGCIVAAACGYFSHADIDAAPAASFIWVKTFPLSVYGPMVLPIIAVFIICACECIGDVTATCDVSRLEVRGGTFESRIQGAVLADGINSVVAALATMTPMTTFAQNNGVIALTRCANRWAGYCCCLILIVAGIFAKFAAAIVAIPNSVMGGMKTFLFASVVISGQAIVAKAPFTRRNRFILTASMALGYGATLVPTWFGNVFPQTENRDLEGFENAIELVLETGFAVTAFVAMLLNAIMPAEVEEIGAVTPMPVSAHDNRDGEAEYQSKQA.

A disordered region spans residues 1–20 (MDNSIHSTDGPDSVIPNSNP). Helical transmembrane passes span 77–97 (LLAF…VVTP), 111–131 (LQQY…MVQI), 141–161 (YYIG…ISVA), 188–209 (AYGA…LAFV), 217–237 (IFPP…LIGT), 264–284 (LPWG…SIIL), 296–315 (CSVV…CGYF), 338–361 (VYGP…IGDV), 427–447 (CCLI…IVAI), 451–471 (VMGG…QAIV), 482–502 (FILT…TWFG), and 522–542 (LVLE…NAIM). Residues 555-574 (MPVSAHDNRDGEAEYQSKQA) form a disordered region. A Glycyl lysine isopeptide (Lys-Gly) (interchain with G-Cter in ubiquitin) cross-link involves residue lysine 572.

Belongs to the nucleobase:cation symporter-2 (NCS2) (TC 2.A.40) family. Ubiquitinated by hulA. Ubiquitination leads to internalization, sorting into the endosomal pathway to the vacuolar lumen where uapA is eventually degraded.

Its subcellular location is the cell membrane. In terms of biological role, uric acid-xanthine transporter. This Emericella nidulans (strain FGSC A4 / ATCC 38163 / CBS 112.46 / NRRL 194 / M139) (Aspergillus nidulans) protein is Uric acid-xanthine permease (uapA).